The chain runs to 158 residues: Endoribonuclease YbeY (158 aa).

3 residues coordinate Zn(2+): His124, His128, and His134.

It belongs to the endoribonuclease YbeY family. It depends on Zn(2+) as a cofactor.

The protein localises to the cytoplasm. In terms of biological role, single strand-specific metallo-endoribonuclease involved in late-stage 70S ribosome quality control and in maturation of the 3' terminus of the 16S rRNA. The polypeptide is Endoribonuclease YbeY (Caldicellulosiruptor bescii (strain ATCC BAA-1888 / DSM 6725 / KCTC 15123 / Z-1320) (Anaerocellum thermophilum)).